A 238-amino-acid polypeptide reads, in one-letter code: MRIERVDDTTVKLFITYSDIEARGFKREDLWTNRKRGEEFFWNMMEEINEEEDFVVEGPLWIQVHAFEKGVEVTISKSKNEDLINMSDEDNEQLDYQVNDLLSQTFDQDDSLEDLFDQRQQQKDNKQNQDQNERNRQNTRTVIVKFNDLEEVIEYAHYNNQVTDEFEDLLYSLNNVYYYAVHYDETVDQETINDSYSQLLEFAYPTDKSEVYLNDYAKIIMSHNVASQVRRYFPNTEA.

A compositionally biased stretch (basic and acidic residues) spans 120–136; it reads QQQKDNKQNQDQNERNR. The interval 120-139 is disordered; that stretch reads QQQKDNKQNQDQNERNRQNT.

It belongs to the MecA family. As to quaternary structure, homodimer.

Functionally, enables the recognition and targeting of unfolded and aggregated proteins to the ClpC protease or to other proteins involved in proteolysis. The chain is Adapter protein MecA from Staphylococcus saprophyticus subsp. saprophyticus (strain ATCC 15305 / DSM 20229 / NCIMB 8711 / NCTC 7292 / S-41).